A 689-amino-acid polypeptide reads, in one-letter code: Pentatricopeptide repeat-containing protein At2g03380, mitochondrial (689 aa).

A mitochondrion-targeting transit peptide spans 1–12; sequence MLRSITLSPTRR. 16 PPR repeats span residues 75 to 105, 106 to 140, 141 to 171, 175 to 205, 206 to 240, 241 to 275, 276 to 306, 307 to 341, 342 to 372, 376 to 406, 407 to 441, 442 to 476, 479 to 509, 510 to 544, 545 to 580, and 581 to 611; these read DISI…IPEP, DFYL…GFRY, DDIV…LVKV, DNVV…ITLR, NVVC…NVLG, NEYT…GIEL, SSCL…HSHV, DLVM…EIKP, NCVT…SIKV, DTNV…ESEK, DIVA…SVTP, NGVT…GFLA, SVHV…IEEK, NTIT…QQKP, NEST…NFTP, and STKH…MPIQ. The interval 616-689 is type E motif; degenerate; the sequence is CFGAFLHGCG…SKIAGHSTME (74 aa).

Belongs to the PPR family. PCMP-E subfamily.

The protein localises to the mitochondrion. This is Pentatricopeptide repeat-containing protein At2g03380, mitochondrial (PCMP-E47) from Arabidopsis thaliana (Mouse-ear cress).